A 149-amino-acid polypeptide reads, in one-letter code: Small ribosomal subunit protein bS16 (149 aa).

The interval 115-149 (KLKAAKSEADAKAKAEAEAAATEEAPAEEPAAEAE) is disordered. A compositionally biased stretch (basic and acidic residues) spans 119–131 (AKSEADAKAKAEA). A compositionally biased stretch (acidic residues) spans 139-149 (APAEEPAAEAE).

The protein belongs to the bacterial ribosomal protein bS16 family.

The sequence is that of Small ribosomal subunit protein bS16 from Bifidobacterium adolescentis (strain ATCC 15703 / DSM 20083 / NCTC 11814 / E194a).